Consider the following 64-residue polypeptide: Putative H/ACA ribonucleoprotein complex subunit 3 (64 aa).

Belongs to the NOP10 family. In terms of assembly, component of the small nucleolar ribonucleoprotein particles containing H/ACA-type snoRNAs (H/ACA snoRNPs).

The protein resides in the nucleus. It is found in the nucleolus. Its function is as follows. Required for ribosome biogenesis. Part of a complex which catalyzes pseudouridylation of rRNA. This involves the isomerization of uridine such that the ribose is subsequently attached to C5, instead of the normal N1. Pseudouridine ('psi') residues may serve to stabilize the conformation of rRNAs. The protein is Putative H/ACA ribonucleoprotein complex subunit 3 (nola-3) of Caenorhabditis elegans.